The primary structure comprises 525 residues: Biotinidase (525 aa).

Positions 1 to 26 (MSRAGRQLALLLCSCCVAVAIPGGLA) are cleaved as a signal peptide. Residues 54 to 333 (DPLALTSREQ…PGLISAGNAT (280 aa)) form the CN hydrolase domain. The Proton acceptor role is filled by Glu94. N-linked (GlcNAc...) asparagine glycosylation is found at Asn132 and Asn185. Lys194 (proton donor) is an active-site residue. The Nucleophile role is filled by Cys227. A glycan (N-linked (GlcNAc...) asparagine) is linked at Asn384.

This sequence belongs to the carbon-nitrogen hydrolase superfamily. BTD/VNN family.

The protein localises to the secreted. It is found in the extracellular space. The catalysed reaction is biocytin + H2O = biotin + L-lysine. It carries out the reaction biotin amide + H2O = biotin + NH4(+). In terms of biological role, catalytic release of biotin from biocytin, the product of biotin-dependent carboxylases degradation. This chain is Biotinidase (BTD), found in Bos taurus (Bovine).